The following is a 444-amino-acid chain: Phosphoribosylamine--glycine ligase (444 aa).

In terms of domain architecture, ATP-grasp spans 109-324 (RNLFKKYEID…FLDVCFAIAE (216 aa)). Position 140 to 202 (140 to 202 (MTSLGKDVVV…EEKLVGVEFT (63 aa))) interacts with ATP. Positions 282, 294, and 296 each coordinate Mg(2+). Mn(2+)-binding residues include Gln282, Glu294, and Asn296.

This sequence belongs to the GARS family. Mg(2+) serves as cofactor. Mn(2+) is required as a cofactor.

The enzyme catalyses 5-phospho-beta-D-ribosylamine + glycine + ATP = N(1)-(5-phospho-beta-D-ribosyl)glycinamide + ADP + phosphate + H(+). It functions in the pathway purine metabolism; IMP biosynthesis via de novo pathway; N(1)-(5-phospho-D-ribosyl)glycinamide from 5-phospho-alpha-D-ribose 1-diphosphate: step 2/2. In Methanococcus maripaludis (strain C5 / ATCC BAA-1333), this protein is Phosphoribosylamine--glycine ligase.